The primary structure comprises 186 residues: Thiol:disulfide interchange protein CycY (186 aa).

The first 20 residues, 1 to 20, serve as a signal peptide directing secretion; sequence MGRYTLALLPLIVFGGIAHG. The region spanning 47 to 182 is the Thioredoxin domain; the sequence is DAEPAAARRA…LVPAMEKALG (136 aa). Cysteine 80 and cysteine 83 form a disulfide bridge.

The protein belongs to the thioredoxin family. DsbE subfamily.

The protein resides in the periplasm. In terms of biological role, required for disulfide bond formation in some periplasmic proteins. Also acts as a disulfide oxidoreductase in cytochromes c biogenesis. The cysteines of apocytochromes c must be in the reduced state for covalent linkage between the two moieties to occur. This Rhizobium leguminosarum bv. viciae protein is Thiol:disulfide interchange protein CycY (cycY).